A 223-amino-acid chain; its full sequence is Phosphoglycolate phosphatase (223 aa).

The active-site Nucleophile is aspartate 10. Positions 10 and 12 each coordinate Mg(2+). Lysine 149 contacts substrate. Positions 172 and 176 each coordinate Mg(2+).

The protein belongs to the archaeal SPP-like hydrolase family. Mg(2+) serves as cofactor.

It carries out the reaction 2-phosphoglycolate + H2O = glycolate + phosphate. Catalyzes the dephosphorylation of 2-phosphoglycolate. This Archaeoglobus fulgidus (strain ATCC 49558 / DSM 4304 / JCM 9628 / NBRC 100126 / VC-16) protein is Phosphoglycolate phosphatase.